Reading from the N-terminus, the 243-residue chain is 2,3-bisphosphoglycerate-dependent phosphoglycerate mutase (243 aa).

Substrate-binding positions include 8-15, 21-22, Arg60, 87-90, Lys98, 114-115, and 183-184; these read RHGQSEWN, TG, ERHY, RR, and GN. The active-site Tele-phosphohistidine intermediate is His9. Glu87 functions as the Proton donor/acceptor in the catalytic mechanism.

This sequence belongs to the phosphoglycerate mutase family. BPG-dependent PGAM subfamily. As to quaternary structure, homodimer.

It carries out the reaction (2R)-2-phosphoglycerate = (2R)-3-phosphoglycerate. Its pathway is carbohydrate degradation; glycolysis; pyruvate from D-glyceraldehyde 3-phosphate: step 3/5. Its function is as follows. Catalyzes the interconversion of 2-phosphoglycerate and 3-phosphoglycerate. This is 2,3-bisphosphoglycerate-dependent phosphoglycerate mutase from Maricaulis maris (strain MCS10) (Caulobacter maris).